Reading from the N-terminus, the 27-residue chain is Secretin (27 aa).

The residue at position 27 (methionine 27) is a Methionine amide.

Belongs to the glucagon family.

It localises to the secreted. Hormone involved in different processes, such as regulation of the pH of the duodenal content, food intake and water homeostasis. Exerts its biological effects by binding to secretin receptor (SCTR), a G-protein coupled receptor expressed in the basolateral domain of several cells. The chain is Secretin from Gallus gallus (Chicken).